We begin with the raw amino-acid sequence, 973 residues long: MLQQNNEQLLNLLPDKMMEKTFNPTDIEQSLYTSWEEQGYFSPTGEGDSYSIAIPPPNVTGSLHMGHAFQQTIMDTLIRYQRMQGKNTLWQTGCDHAGIATQMVVERKIAAEEDKTRHDYGREGFIDKIWEWKEESGGTIGKQMRRLGNSIDWSRERFTMDDGMSEAVQEVFVRLFEDDLIYRGKRLVNWDPKFHTAISDLEVENKDKKGHMWHLRYPLANGAKTAEGLDYLVVATTRPETMLGDTGVAVNPEDPRYKDLIGKQVLLPLVNRLIPIVGDDHADMEKGTGCVKITPGHDFNDNEVGKRHALPQINILDKDAAILATAEVYDTKGEVCNAYDTGLPSEFAGMDRFVARKAIVAKFDELGLLVEVKDHDLVAPYGDRSGVIIEPLLTDQWYVRVEKLAGPAVDAVKDGQIEFVPKQYENMYFSWMNNIQDWCISRQLWWGHRIPAWYDENEKVYVGRTEEEVRANNDIAADMKLRQDDDVLDTWFSSALWTFSTLGWPKDTEDLKTFHPTDVLVTGFDIIFFWVARMIMMTMHFNKDENGKAQIPFKKIYMTGLIRDENGDKMSKSKGNVVDPLDMIDGISLEDLLQKRTGNMMQPKLAKKIEKLTRKEYPEGIEAHGTDALRFTLTSVATTGRDISWDMKRLEGYRNFTNKLWNASRYVMMNTEEFDCGQSSPEGKAGDMELSLADRWIIGQFEQTVKTVHEAFDTYRFDLASQALYEFTWNQFCDWYLELTKPVLFKENEAQQRGTRHTLVNVLEALLRLMHPIMPFITETIWQRVQPLSDFSKNGDSIMVQAFPQFDESKCDQQAIDDLEWVKQFIIAIRNIRGEMDISPSKELPVLLKNVNDNDQRRLDENEQFLSSLAKLESITVLADDEQGPASASAVVGDLSVLIPMAGLIDKEAELARLDKAIEKLEKEAGRVRGKLGNENFVSKAPAAVIEKEQAKLADAESTLAKILEQKIQIAAL.

Positions Pro-57–His-67 match the 'HIGH' region motif. The 'KMSKS' region motif lies at Lys-569–Ser-573. Residue Lys-572 participates in ATP binding. Positions Met-901–Ile-970 form a coiled coil.

It belongs to the class-I aminoacyl-tRNA synthetase family. ValS type 1 subfamily. Monomer.

It is found in the cytoplasm. The enzyme catalyses tRNA(Val) + L-valine + ATP = L-valyl-tRNA(Val) + AMP + diphosphate. In terms of biological role, catalyzes the attachment of valine to tRNA(Val). As ValRS can inadvertently accommodate and process structurally similar amino acids such as threonine, to avoid such errors, it has a 'posttransfer' editing activity that hydrolyzes mischarged Thr-tRNA(Val) in a tRNA-dependent manner. This chain is Valine--tRNA ligase, found in Colwellia psychrerythraea (strain 34H / ATCC BAA-681) (Vibrio psychroerythus).